Reading from the N-terminus, the 279-residue chain is Urease accessory protein UreD (279 aa).

The protein belongs to the UreD family. As to quaternary structure, ureD, UreF and UreG form a complex that acts as a GTP-hydrolysis-dependent molecular chaperone, activating the urease apoprotein by helping to assemble the nickel containing metallocenter of UreC. The UreE protein probably delivers the nickel.

It localises to the cytoplasm. Functionally, required for maturation of urease via the functional incorporation of the urease nickel metallocenter. This is Urease accessory protein UreD from Trichormus variabilis (strain ATCC 29413 / PCC 7937) (Anabaena variabilis).